A 310-amino-acid polypeptide reads, in one-letter code: Terpene synthase 6 (310 aa).

A DDxx(x)D/E motif motif is present at residues 93 to 98; the sequence is DDFYFE. The NDxxSxxxD/E motif signature appears at 222–230; sequence NDCYSFNKE.

Belongs to the terpene synthase family.

The enzyme catalyses (2E,6E)-farnesyl diphosphate = (E)-beta-farnesene + diphosphate. It carries out the reaction (2E,6E)-farnesyl diphosphate = (1S,2S,4R)-beta-elemene + diphosphate. It catalyses the reaction (2E,6E)-farnesyl diphosphate = (3E,6E)-alpha-farnesene + diphosphate. Terpene synthase that converts its substrate farnesyl diphosphate (FPP) into the sesquiterpenes beta-elemene, (E)-beta-farnesene and (E,E)-alpha-farnesene. The chain is Terpene synthase 6 from Dictyostelium purpureum (Slime mold).